A 601-amino-acid polypeptide reads, in one-letter code: Glutathione-regulated potassium-efflux system protein KefB (601 aa).

13 consecutive transmembrane segments (helical) span residues 4 to 24, 29 to 49, 55 to 75, 87 to 107, 111 to 131, 152 to 172, 177 to 197, 207 to 227, 230 to 250, 262 to 282, 284 to 304, 324 to 344, and 356 to 376; these read ADLL…VPLA, IGAV…GLGF, EILH…GLEL, IFGV…GLLM, FLWQ…TAMA, VLLF…LLAG, HFDW…LIGG, FIAA…LVLS, LFMD…GVLL, AIDP…GMSL, LGVL…LVVI, MQFA…FSTA, and ALLL…MKGI. The RCK N-terminal domain maps to 400–519; it reads KPQVIVVGFG…AGVTQFSRET (120 aa).

Belongs to the monovalent cation:proton antiporter 2 (CPA2) transporter (TC 2.A.37) family. KefB subfamily. Interacts with the regulatory subunit KefG.

It is found in the cell inner membrane. Pore-forming subunit of a potassium efflux system that confers protection against electrophiles. Catalyzes K(+)/H(+) antiport. The protein is Glutathione-regulated potassium-efflux system protein KefB of Salmonella paratyphi C (strain RKS4594).